Consider the following 416-residue polypeptide: MAAASTNRLRLLYTSTRASLPQSTPSILTTRTYATTDSSTSATSTPKPRRRTAFTDKLNAGPSFGDFVSGNNDNAPLIDPSEAYALETALVGPAGRKKQMTRLPPWLKTPIPDSKNYQRLKKDLRGLNLHTVCEEARCPNISDCWGGGDKAAATATIMLMGDTCTRGCSFCSVKTSRRPAALDPHEPENTAEAISRWGLGYVVLTSVDRDDLADGGARHFAETVRKIKSKAPSTLVECLTGDYRGDLDMVALVANSGLDVYAHNIETVEALTPRVRDRRATFKQSIAVLEAAKKANPEVITKSSLMLGLGETEEQLEHALAQLRAVDVDVVTFGQYMRPTKRHMAVHEYVHPRWFEHWQRRAEELGFLYCASGPLVRSSYKAGEAFIENVLKKRRAGVSDAVAEKKVAAAVDEAAR.

A mitochondrion-targeting transit peptide spans 1 to 33; it reads MAAASTNRLRLLYTSTRASLPQSTPSILTTRTY. Residues 20-52 are disordered; it reads LPQSTPSILTTRTYATTDSSTSATSTPKPRRRT. Positions 29-46 are enriched in low complexity; sequence TTRTYATTDSSTSATSTP. The [4Fe-4S] cluster site is built by Cys-133, Cys-138, Cys-144, Cys-164, Cys-168, Cys-171, and Ser-379. The region spanning 147–368 is the Radical SAM core domain; sequence GGDKAAATAT…QRRAEELGFL (222 aa).

It belongs to the radical SAM superfamily. Lipoyl synthase family. [4Fe-4S] cluster serves as cofactor.

It is found in the mitochondrion. It carries out the reaction [[Fe-S] cluster scaffold protein carrying a second [4Fe-4S](2+) cluster] + N(6)-octanoyl-L-lysyl-[protein] + 2 oxidized [2Fe-2S]-[ferredoxin] + 2 S-adenosyl-L-methionine + 4 H(+) = [[Fe-S] cluster scaffold protein] + N(6)-[(R)-dihydrolipoyl]-L-lysyl-[protein] + 4 Fe(3+) + 2 hydrogen sulfide + 2 5'-deoxyadenosine + 2 L-methionine + 2 reduced [2Fe-2S]-[ferredoxin]. Its pathway is protein modification; protein lipoylation via endogenous pathway; protein N(6)-(lipoyl)lysine from octanoyl-[acyl-carrier-protein]: step 2/2. Functionally, catalyzes the radical-mediated insertion of two sulfur atoms into the C-6 and C-8 positions of the octanoyl moiety bound to the lipoyl domains of lipoate-dependent enzymes, thereby converting the octanoylated domains into lipoylated derivatives. The protein is Lipoyl synthase, mitochondrial of Aspergillus niger (strain ATCC MYA-4892 / CBS 513.88 / FGSC A1513).